Reading from the N-terminus, the 326-residue chain is WD repeat-containing protein slr1409 (326 aa).

6 WD repeats span residues 47 to 77 (GSDV…TLWT), 88 to 118 (GQKP…RLWN), 129 to 159 (PHRA…KIFT), 169 to 199 (LKSG…HLIN), 210 to 240 (TGQG…KLWN), and 252 to 282 (VPTG…RFWQ).

This Synechocystis sp. (strain ATCC 27184 / PCC 6803 / Kazusa) protein is WD repeat-containing protein slr1409.